The primary structure comprises 439 residues: Paraneoplastic antigen-like protein 8A (439 aa).

The tract at residues 208 to 439 (SALKAETPNN…RRATNESRKV (232 aa)) is disordered. The span at 231 to 249 (LVRRAGAKSRSRRKKQKKN) shows a compositional bias: basic residues. Composition is skewed to basic and acidic residues over residues 314-326 (GPRE…RAEA), 395-404 (SRREASDQKA), and 423-439 (AKPE…SRKV).

Belongs to the PNMA family.

The chain is Paraneoplastic antigen-like protein 8A from Homo sapiens (Human).